Here is a 206-residue protein sequence, read N- to C-terminus: Outer-membrane lipoprotein LolB (206 aa).

The first 18 residues, 1-18 (MKTFKFLTALFATAILTA), serve as a signal peptide directing secretion. A lipid anchor (N-palmitoyl cysteine) is attached at C19. C19 carries the S-diacylglycerol cysteine lipid modification.

Belongs to the LolB family. In terms of assembly, monomer.

The protein localises to the cell outer membrane. Its function is as follows. Plays a critical role in the incorporation of lipoproteins in the outer membrane after they are released by the LolA protein. The protein is Outer-membrane lipoprotein LolB of Haemophilus influenzae (strain PittEE).